A 227-amino-acid chain; its full sequence is Cytochrome c oxidase subunit 2 (227 aa).

Residues 1 to 14 (MAHAAQVGLQDATS) lie on the Mitochondrial intermembrane side of the membrane. The chain crosses the membrane as a helical span at residues 15–45 (PIMEELIIFHDHALMIIFLICFLVLYALFLT). Over 46-59 (LTTKLTSTNISDAQ) the chain is Mitochondrial matrix. A helical transmembrane segment spans residues 60-87 (EMETVWTILPAIILVLIALPSLRILYMT). Over 88-227 (DEINDPSFTI…IFEMGPVFTL (140 aa)) the chain is Mitochondrial intermembrane. Positions 161, 196, 198, 200, 204, and 207 each coordinate Cu cation. A Mg(2+)-binding site is contributed by Glu198.

The protein belongs to the cytochrome c oxidase subunit 2 family. In terms of assembly, component of the cytochrome c oxidase (complex IV, CIV), a multisubunit enzyme composed of 14 subunits. The complex is composed of a catalytic core of 3 subunits MT-CO1, MT-CO2 and MT-CO3, encoded in the mitochondrial DNA, and 11 supernumerary subunits COX4I, COX5A, COX5B, COX6A, COX6B, COX6C, COX7A, COX7B, COX7C, COX8 and NDUFA4, which are encoded in the nuclear genome. The complex exists as a monomer or a dimer and forms supercomplexes (SCs) in the inner mitochondrial membrane with NADH-ubiquinone oxidoreductase (complex I, CI) and ubiquinol-cytochrome c oxidoreductase (cytochrome b-c1 complex, complex III, CIII), resulting in different assemblies (supercomplex SCI(1)III(2)IV(1) and megacomplex MCI(2)III(2)IV(2)). Found in a complex with TMEM177, COA6, COX18, COX20, SCO1 and SCO2. Interacts with TMEM177 in a COX20-dependent manner. Interacts with COX20. Interacts with COX16. It depends on Cu cation as a cofactor.

The protein localises to the mitochondrion inner membrane. It catalyses the reaction 4 Fe(II)-[cytochrome c] + O2 + 8 H(+)(in) = 4 Fe(III)-[cytochrome c] + 2 H2O + 4 H(+)(out). In terms of biological role, component of the cytochrome c oxidase, the last enzyme in the mitochondrial electron transport chain which drives oxidative phosphorylation. The respiratory chain contains 3 multisubunit complexes succinate dehydrogenase (complex II, CII), ubiquinol-cytochrome c oxidoreductase (cytochrome b-c1 complex, complex III, CIII) and cytochrome c oxidase (complex IV, CIV), that cooperate to transfer electrons derived from NADH and succinate to molecular oxygen, creating an electrochemical gradient over the inner membrane that drives transmembrane transport and the ATP synthase. Cytochrome c oxidase is the component of the respiratory chain that catalyzes the reduction of oxygen to water. Electrons originating from reduced cytochrome c in the intermembrane space (IMS) are transferred via the dinuclear copper A center (CU(A)) of subunit 2 and heme A of subunit 1 to the active site in subunit 1, a binuclear center (BNC) formed by heme A3 and copper B (CU(B)). The BNC reduces molecular oxygen to 2 water molecules using 4 electrons from cytochrome c in the IMS and 4 protons from the mitochondrial matrix. This is Cytochrome c oxidase subunit 2 (MT-CO2) from Gorilla gorilla beringei (Mountain gorilla).